The chain runs to 311 residues: Pyrimidine-specific ribonucleoside hydrolase RihA (311 aa).

Histidine 240 is an active-site residue.

Belongs to the IUNH family. RihA subfamily.

Hydrolyzes cytidine or uridine to ribose and cytosine or uracil, respectively. This is Pyrimidine-specific ribonucleoside hydrolase RihA from Salmonella paratyphi A (strain ATCC 9150 / SARB42).